We begin with the raw amino-acid sequence, 104 residues long: Large ribosomal subunit protein uL24 (104 aa).

Belongs to the universal ribosomal protein uL24 family. In terms of assembly, part of the 50S ribosomal subunit.

Its function is as follows. One of two assembly initiator proteins, it binds directly to the 5'-end of the 23S rRNA, where it nucleates assembly of the 50S subunit. Functionally, one of the proteins that surrounds the polypeptide exit tunnel on the outside of the subunit. The polypeptide is Large ribosomal subunit protein uL24 (Saccharopolyspora erythraea (strain ATCC 11635 / DSM 40517 / JCM 4748 / NBRC 13426 / NCIMB 8594 / NRRL 2338)).